The chain runs to 95 residues: Co-chaperonin GroES (95 aa).

The protein belongs to the GroES chaperonin family. In terms of assembly, heptamer of 7 subunits arranged in a ring. Interacts with the chaperonin GroEL.

Its subcellular location is the cytoplasm. Its function is as follows. Together with the chaperonin GroEL, plays an essential role in assisting protein folding. The GroEL-GroES system forms a nano-cage that allows encapsulation of the non-native substrate proteins and provides a physical environment optimized to promote and accelerate protein folding. GroES binds to the apical surface of the GroEL ring, thereby capping the opening of the GroEL channel. In Ruegeria sp. (strain TM1040) (Silicibacter sp.), this protein is Co-chaperonin GroES.